Consider the following 216-residue polypeptide: Probable nicotinate-nucleotide adenylyltransferase (216 aa).

It belongs to the NadD family.

The catalysed reaction is nicotinate beta-D-ribonucleotide + ATP + H(+) = deamido-NAD(+) + diphosphate. Its pathway is cofactor biosynthesis; NAD(+) biosynthesis; deamido-NAD(+) from nicotinate D-ribonucleotide: step 1/1. Its function is as follows. Catalyzes the reversible adenylation of nicotinate mononucleotide (NaMN) to nicotinic acid adenine dinucleotide (NaAD). The chain is Probable nicotinate-nucleotide adenylyltransferase from Geobacter sulfurreducens (strain ATCC 51573 / DSM 12127 / PCA).